A 214-amino-acid chain; its full sequence is Pyridoxine/pyridoxamine 5'-phosphate oxidase (214 aa).

Substrate contacts are provided by residues 8–11 and lysine 66; that span reads RINY. Residues 61–66, 76–77, arginine 82, lysine 83, and glutamine 105 each bind FMN; these read RILLIK and FT. The substrate site is built by tyrosine 123, arginine 127, and serine 131. FMN contacts are provided by residues 140–141 and tryptophan 184; that span reads QS. Position 190 to 192 (190 to 192) interacts with substrate; it reads RLH. Arginine 194 provides a ligand contact to FMN.

The protein belongs to the pyridoxamine 5'-phosphate oxidase family. As to quaternary structure, homodimer. FMN serves as cofactor.

It catalyses the reaction pyridoxamine 5'-phosphate + O2 + H2O = pyridoxal 5'-phosphate + H2O2 + NH4(+). It carries out the reaction pyridoxine 5'-phosphate + O2 = pyridoxal 5'-phosphate + H2O2. It participates in cofactor metabolism; pyridoxal 5'-phosphate salvage; pyridoxal 5'-phosphate from pyridoxamine 5'-phosphate: step 1/1. The protein operates within cofactor metabolism; pyridoxal 5'-phosphate salvage; pyridoxal 5'-phosphate from pyridoxine 5'-phosphate: step 1/1. Functionally, catalyzes the oxidation of either pyridoxine 5'-phosphate (PNP) or pyridoxamine 5'-phosphate (PMP) into pyridoxal 5'-phosphate (PLP). The protein is Pyridoxine/pyridoxamine 5'-phosphate oxidase of Burkholderia vietnamiensis (strain G4 / LMG 22486) (Burkholderia cepacia (strain R1808)).